A 280-amino-acid polypeptide reads, in one-letter code: Undecaprenyl-diphosphatase (280 aa).

The next 8 helical transmembrane spans lie at 1-21 (MTIL…FLPV), 41-61 (FVRA…LVLY), 87-107 (FDLY…GFLF), 115-135 (LGSV…MLFV), 147-167 (ITYP…FLPG), 186-206 (KAAA…ATLL), 225-245 (IVLL…IKFF), and 260-280 (YRIL…SLAV).

The protein belongs to the UppP family.

Its subcellular location is the cell inner membrane. It catalyses the reaction di-trans,octa-cis-undecaprenyl diphosphate + H2O = di-trans,octa-cis-undecaprenyl phosphate + phosphate + H(+). Functionally, catalyzes the dephosphorylation of undecaprenyl diphosphate (UPP). Confers resistance to bacitracin. This is Undecaprenyl-diphosphatase from Porphyromonas gingivalis (strain ATCC 33277 / DSM 20709 / CIP 103683 / JCM 12257 / NCTC 11834 / 2561).